The primary structure comprises 208 residues: 3-demethoxyubiquinol 3-hydroxylase (208 aa).

Residues Glu57, Glu87, His90, Glu139, Glu171, and His174 each coordinate Fe cation.

The protein belongs to the COQ7 family. Fe cation serves as cofactor.

Its subcellular location is the cell membrane. It catalyses the reaction a 5-methoxy-2-methyl-3-(all-trans-polyprenyl)benzene-1,4-diol + AH2 + O2 = a 3-demethylubiquinol + A + H2O. The protein operates within cofactor biosynthesis; ubiquinone biosynthesis. Catalyzes the hydroxylation of 2-nonaprenyl-3-methyl-6-methoxy-1,4-benzoquinol during ubiquinone biosynthesis. The chain is 3-demethoxyubiquinol 3-hydroxylase from Burkholderia ambifaria (strain ATCC BAA-244 / DSM 16087 / CCUG 44356 / LMG 19182 / AMMD) (Burkholderia cepacia (strain AMMD)).